Here is a 398-residue protein sequence, read N- to C-terminus: 4-hydroxy-3-methylbut-2-en-1-yl diphosphate synthase (ferredoxin) (398 aa).

[4Fe-4S] cluster is bound by residues Cys306, Cys309, Cys340, and Glu347.

This sequence belongs to the IspG family. [4Fe-4S] cluster serves as cofactor.

It catalyses the reaction (2E)-4-hydroxy-3-methylbut-2-enyl diphosphate + 2 oxidized [2Fe-2S]-[ferredoxin] + H2O = 2-C-methyl-D-erythritol 2,4-cyclic diphosphate + 2 reduced [2Fe-2S]-[ferredoxin] + H(+). It participates in isoprenoid biosynthesis; isopentenyl diphosphate biosynthesis via DXP pathway; isopentenyl diphosphate from 1-deoxy-D-xylulose 5-phosphate: step 5/6. Functionally, converts 2C-methyl-D-erythritol 2,4-cyclodiphosphate (ME-2,4cPP) into 1-hydroxy-2-methyl-2-(E)-butenyl 4-diphosphate. This Synechococcus sp. (strain CC9605) protein is 4-hydroxy-3-methylbut-2-en-1-yl diphosphate synthase (ferredoxin).